We begin with the raw amino-acid sequence, 64 residues long: Conotoxin mr5.1a (64 aa).

A signal peptide spans methionine 1–serine 19. Residues valine 20–asparagine 48 constitute a propeptide that is removed on maturation. A 4-carboxyglutamate modification is found at glutamate 60.

It belongs to the conotoxin T superfamily. Contains 2 disulfide bonds that can be either 'C1-C3, C2-C4' or 'C1-C4, C2-C3', since these disulfide connectivities have been observed for conotoxins with cysteine framework V (for examples, see AC P0DQQ7 and AC P81755). In terms of tissue distribution, expressed by the venom duct.

The protein resides in the secreted. The protein is Conotoxin mr5.1a of Conus marmoreus (Marble cone).